Reading from the N-terminus, the 229-residue chain is GTP cyclohydrolase 1 (229 aa).

Positions 1 to 31 (MFRESDNTIAPSNQDLNKPVVDKEQPAERTP) are disordered. Residues 7–16 (NTIAPSNQDL) show a composition bias toward polar residues. Zn(2+) contacts are provided by Cys117, His120, and Cys188.

This sequence belongs to the GTP cyclohydrolase I family. As to quaternary structure, toroid-shaped homodecamer, composed of two pentamers of five dimers.

The catalysed reaction is GTP + H2O = 7,8-dihydroneopterin 3'-triphosphate + formate + H(+). The protein operates within cofactor biosynthesis; 7,8-dihydroneopterin triphosphate biosynthesis; 7,8-dihydroneopterin triphosphate from GTP: step 1/1. This chain is GTP cyclohydrolase 1, found in Rhodopirellula baltica (strain DSM 10527 / NCIMB 13988 / SH1).